Consider the following 206-residue polypeptide: Two-component response regulator ORR7 (206 aa).

The segment at 53–92 (VVPLHDNASAEDDDDDEEDDDEDDDDDDDEDDEEEAAPPY) is disordered. The span at 61-88 (SAEDDDDDEEDDDEDDDDDDDEDDEEEA) shows a compositional bias: acidic residues. The region spanning 92–205 (YVMAVDDSSV…DISRITSRML (114 aa)) is the Response regulatory domain. The residue at position 138 (Asp-138) is a 4-aspartylphosphate.

The protein belongs to the ARR family. Type-A subfamily. Post-translationally, two-component system major event consists of a His-to-Asp phosphorelay between a sensor histidine kinase (HK) and a response regulator (RR). In plants, the His-to-Asp phosphorelay involves an additional intermediate named Histidine-containing phosphotransfer protein (HPt). This multistep phosphorelay consists of a His-Asp-His-Asp sequential transfer of a phosphate group between first a His and an Asp of the HK protein, followed by the transfer to a conserved His of the HPt protein and finally the transfer to an Asp in the receiver domain of the RR protein. As to expression, expressed in flowers, and at low levels in roots, mature leaves and shoots.

Its function is as follows. Functions as a response regulator involved in His-to-Asp phosphorelay signal transduction system. Phosphorylation of the Asp residue in the receiver domain activates the ability of the protein to promote the transcription of target genes. Type-A response regulators seem to act as negative regulators of the cytokinin signaling. The sequence is that of Two-component response regulator ORR7 from Oryza sativa subsp. indica (Rice).